The sequence spans 88 residues: Mini zinc finger protein 3 (88 aa).

The ZF-HD dimerization-type; degenerate zinc-finger motif lies at 26–72 (YVECQKNHAANIGGYAVDGCREFMASGGDDALTCAACGCHRNFHRRE).

In terms of assembly, homo- and heterodimers. Interacts with ZHD3, ZHD5, ZHD6, ZHD7, ZHD8, ZHD9, ZHD10 and ZHD13. In terms of tissue distribution, mostly expressed in roots, stems and flowers, present in seedlings and leaves, and weakly observed in inflorescence and siliques.

It is found in the cytoplasm. Inhibits zinc finger homeodomain (ZHD) transcription factors by interacting with them to prevent both their nuclear localization and their DNA-binding properties. Involved in integrating signals from multiple hormones by regulating the expression of specific genes. Promotes the formation of ectopic shoot meristems on leaf margins. The protein is Mini zinc finger protein 3 (MIF3) of Arabidopsis thaliana (Mouse-ear cress).